A 175-amino-acid polypeptide reads, in one-letter code: Protein ppBat (175 aa).

Residues Cys74 and Cys111 each coordinate Zn(2+). Riboflavin-binding residues include Asn161 and Trp164.

In terms of assembly, homodimer.

Functionally, binds flavin derivatives, such as lumichrome, riboflavin, FMN, and FAD. May act as a flavin storage protein. Appears to lack proteolytic or chaperone activities. The protein is Protein ppBat of Bacteroides thetaiotaomicron (strain ATCC 29148 / DSM 2079 / JCM 5827 / CCUG 10774 / NCTC 10582 / VPI-5482 / E50).